The following is a 154-amino-acid chain: Myoglobin (154 aa).

Positions 2–148 constitute a Globin domain; the sequence is VLTDAEWHLV…FRKDIAAKYK (147 aa). His65 contacts nitrite. His65 serves as a coordination point for O2. Thr68 is modified (phosphothreonine). A heme b-binding site is contributed by His94.

The protein belongs to the globin family. As to quaternary structure, monomeric.

It localises to the cytoplasm. The protein localises to the sarcoplasm. It carries out the reaction Fe(III)-heme b-[protein] + nitric oxide + H2O = Fe(II)-heme b-[protein] + nitrite + 2 H(+). The enzyme catalyses H2O2 + AH2 = A + 2 H2O. In terms of biological role, monomeric heme protein which primary function is to store oxygen and facilitate its diffusion within muscle tissues. Reversibly binds oxygen through a pentacoordinated heme iron and enables its timely and efficient release as needed during periods of heightened demand. Depending on the oxidative conditions of tissues and cells, and in addition to its ability to bind oxygen, it also has a nitrite reductase activity whereby it regulates the production of bioactive nitric oxide. Under stress conditions, like hypoxia and anoxia, it also protects cells against reactive oxygen species thanks to its pseudoperoxidase activity. This chain is Myoglobin (MB), found in Balaenoptera physalus (Fin whale).